Here is a 139-residue protein sequence, read N- to C-terminus: Ribonuclease P protein component (139 aa).

The protein belongs to the RnpA family. As to quaternary structure, consists of a catalytic RNA component (M1 or rnpB) and a protein subunit.

The catalysed reaction is Endonucleolytic cleavage of RNA, removing 5'-extranucleotides from tRNA precursor.. Its function is as follows. RNaseP catalyzes the removal of the 5'-leader sequence from pre-tRNA to produce the mature 5'-terminus. It can also cleave other RNA substrates such as 4.5S RNA. The protein component plays an auxiliary but essential role in vivo by binding to the 5'-leader sequence and broadening the substrate specificity of the ribozyme. The polypeptide is Ribonuclease P protein component (Paraburkholderia xenovorans (strain LB400)).